The chain runs to 151 residues: Cytochrome c-type biogenesis protein CcmE 1 (151 aa).

Over 1–8 the chain is Cytoplasmic; the sequence is MNPLRKKR. Residues 9–29 form a helical; Signal-anchor for type II membrane protein membrane-spanning segment; the sequence is LIIILAILVGVGAAVGLALSA. At 30–151 the chain is on the periplasmic side; the sequence is LQQNINLFYT…QSAPTPAKEG (122 aa). The heme site is built by His124 and Tyr128. The tract at residues 131 to 151 is disordered; it reads PEVTKALKDSGQSAPTPAKEG.

This sequence belongs to the CcmE/CycJ family.

It localises to the cell inner membrane. Its function is as follows. Heme chaperone required for the biogenesis of c-type cytochromes. Transiently binds heme delivered by CcmC and transfers the heme to apo-cytochromes in a process facilitated by CcmF and CcmH. The polypeptide is Cytochrome c-type biogenesis protein CcmE 1 (Pseudomonas fluorescens (strain Pf0-1)).